Consider the following 143-residue polypeptide: Large ribosomal subunit protein uL11 (143 aa).

It belongs to the universal ribosomal protein uL11 family. Part of the ribosomal stalk of the 50S ribosomal subunit. Interacts with L10 and the large rRNA to form the base of the stalk. L10 forms an elongated spine to which L12 dimers bind in a sequential fashion forming a multimeric L10(L12)X complex. Post-translationally, one or more lysine residues are methylated.

Functionally, forms part of the ribosomal stalk which helps the ribosome interact with GTP-bound translation factors. The polypeptide is Large ribosomal subunit protein uL11 (Burkholderia multivorans (strain ATCC 17616 / 249)).